The sequence spans 384 residues: Succinyl-diaminopimelate desuccinylase (384 aa).

A Zn(2+)-binding site is contributed by His-71. Asp-73 is an active-site residue. Asp-104 provides a ligand contact to Zn(2+). The active-site Proton acceptor is the Glu-139. Zn(2+) is bound by residues Glu-140, Glu-168, and His-357.

Belongs to the peptidase M20A family. DapE subfamily. As to quaternary structure, homodimer. Zn(2+) is required as a cofactor. Co(2+) serves as cofactor.

It catalyses the reaction N-succinyl-(2S,6S)-2,6-diaminopimelate + H2O = (2S,6S)-2,6-diaminopimelate + succinate. Its pathway is amino-acid biosynthesis; L-lysine biosynthesis via DAP pathway; LL-2,6-diaminopimelate from (S)-tetrahydrodipicolinate (succinylase route): step 3/3. Functionally, catalyzes the hydrolysis of N-succinyl-L,L-diaminopimelic acid (SDAP), forming succinate and LL-2,6-diaminopimelate (DAP), an intermediate involved in the bacterial biosynthesis of lysine and meso-diaminopimelic acid, an essential component of bacterial cell walls. In Afipia carboxidovorans (strain ATCC 49405 / DSM 1227 / KCTC 32145 / OM5) (Oligotropha carboxidovorans), this protein is Succinyl-diaminopimelate desuccinylase.